We begin with the raw amino-acid sequence, 353 residues long: Cruciform cutting endonuclease 1, mitochondrial (353 aa).

Aspartate 293 and aspartate 294 together coordinate Mg(2+).

Homodimer. It depends on Mg(2+) as a cofactor.

The protein localises to the mitochondrion. The catalysed reaction is Endonucleolytic cleavage at a junction such as a reciprocal single-stranded crossover between two homologous DNA duplexes (Holliday junction).. Capable of resolving Holliday junctions. Specific for 4-way junctions. Seems to be important for the maintenance of mitochondrial DNA. Cleaves fixed junctions at the point of strand exchange. Cleaves after 5'-CT-3' sequence. The protein is Cruciform cutting endonuclease 1, mitochondrial (CCE1) of Saccharomyces cerevisiae (strain ATCC 204508 / S288c) (Baker's yeast).